The sequence spans 146 residues: U1 small nuclear ribonucleoprotein C (146 aa).

A Matrin-type zinc finger spans residues 4–36; the sequence is YYCDYCDTYLTHDSPSVRKTHCTGRKHRDNVKF. The segment at 64–96 is disordered; that stretch reads NNPFAGGPSSAPPKPSGVSIPPPNMGAPPRPGM. Residues 73–96 are compositionally biased toward pro residues; sequence SAPPKPSGVSIPPPNMGAPPRPGM.

It belongs to the U1 small nuclear ribonucleoprotein C family. As to quaternary structure, U1 snRNP is composed of the 7 core Sm proteins B/B', D1, D2, D3, E, F and G that assemble in a heptameric protein ring on the Sm site of the small nuclear RNA to form the core snRNP, and at least 3 U1 snRNP-specific proteins U1-70K, U1-A and U1-C. U1-C interacts with U1 snRNA and the 5' splice-site region of the pre-mRNA.

It localises to the nucleus. In terms of biological role, component of the spliceosomal U1 snRNP, which is essential for recognition of the pre-mRNA 5' splice-site and the subsequent assembly of the spliceosome. U1-C is directly involved in initial 5' splice-site recognition for both constitutive and regulated alternative splicing. The interaction with the 5' splice-site seems to precede base-pairing between the pre-mRNA and the U1 snRNA. Stimulates commitment or early (E) complex formation by stabilizing the base pairing of the 5' end of the U1 snRNA and the 5' splice-site region. This chain is U1 small nuclear ribonucleoprotein C, found in Drosophila pseudoobscura pseudoobscura (Fruit fly).